Here is a 692-residue protein sequence, read N- to C-terminus: Phenoloxidase subunit 2 (692 aa).

Residues 1-97 (MTDRVKSLQL…PRHQEMATEV (97 aa)) constitute a propeptide that is removed on maturation. The Cu cation site is built by His213, His217, and His243. Asn256, Asn295, and Asn309 each carry an N-linked (GlcNAc...) asparagine glycan. The active-site Proton acceptor is the Glu351. Cu cation-binding residues include His366, His370, and His406. Asn494 carries N-linked (GlcNAc...) asparagine glycosylation. 2 disulfide bridges follow: Cys583–Cys628 and Cys585–Cys635.

Belongs to the tyrosinase family. Heterodimer. The cofactor is Cu(2+).

The protein resides in the secreted. It catalyses the reaction L-tyrosine + O2 = L-dopaquinone + H2O. The catalysed reaction is 2 L-dopa + O2 = 2 L-dopaquinone + 2 H2O. Copper-containing oxidase that functions in the formation of pigments such as melanins and other polyphenolic compounds. Catalyzes the rate-limiting conversions of tyrosine to DOPA, DOPA to DOPA-quinone and possibly 5,6 dihydroxyindole to indole-5'6 quinone. Binds to the surface of hemocytes and is involved in hemocyte melanization. Binds the A.niger cell wall component alpha-1,3-glucan, a fungal pathogen-associated molecular pattern (PAMP) that activates the host immune response. The polypeptide is Phenoloxidase subunit 2 (Galleria mellonella (Greater wax moth)).